The following is a 289-amino-acid chain: ATP synthase subunit a (289 aa).

Helical transmembrane passes span 43–63 (AFHLDTLGWSVALGLIFLLIF), 103–123 (VIAPLALTIFVWVFLMNAVDL), 160–180 (FCVFALIIFYSIKVKGLGGFI), 193–213 (IFVQILLIPVNFLLEFVTLIA), 232–252 (VFILIAVMFGSGLLWLSGLGV), and 259–279 (AVFHILIITLQAFIFMMLTIV).

Belongs to the ATPase A chain family. As to quaternary structure, F-type ATPases have 2 components, CF(1) - the catalytic core - and CF(0) - the membrane proton channel. CF(1) has five subunits: alpha(3), beta(3), gamma(1), delta(1), epsilon(1). CF(0) has three main subunits: a(1), b(2) and c(9-12). The alpha and beta chains form an alternating ring which encloses part of the gamma chain. CF(1) is attached to CF(0) by a central stalk formed by the gamma and epsilon chains, while a peripheral stalk is formed by the delta and b chains.

The protein resides in the cell inner membrane. Functionally, key component of the proton channel; it plays a direct role in the translocation of protons across the membrane. The protein is ATP synthase subunit a of Pseudomonas putida (strain ATCC 700007 / DSM 6899 / JCM 31910 / BCRC 17059 / LMG 24140 / F1).